A 114-amino-acid chain; its full sequence is Cyclin-dependent kinase 2-associated protein 1 (114 aa).

Residues 18-57 (AGSVHSPSTSMATSSQYRQLLSDYGPPSLGYTQGTGNSQV) form a disordered region. The interval 19–24 (GSVHSP) is interaction with CDK2AP2. Positions 20–36 (SVHSPSTSMATSSQYRQ) are enriched in polar residues. Phosphoserine; by IKKE is present on S45. Residues 47 to 57 (GYTQGTGNSQV) are compositionally biased toward polar residues.

It belongs to the CDK2AP family. As to quaternary structure, homodimer. Component of the nucleosome remodeling and deacetylase (NuRD) repressor complex, composed of core proteins MTA1, MTA2, MTA3, RBBP4, RBBP7, HDAC1, HDAC2, MBD2, MBD3, and peripherally associated proteins CDK2AP1, CDK2AP2, GATAD2A, GATAD2B, CHD3, CHD4 and CHD5. The exact stoichiometry of the NuRD complex is unknown, and some subunits such as MBD2 and MBD3, GATAD2A and GATAD2B, and CHD3, CHD4 and CHD5 define mutually exclusive NuRD complexes. Interacts with monomeric unphosphorylated CDK2. Interacts with CDK2AP2. Interacts with GATAD2A. Interacts with HDAC1. Interacts with HDAC2. Interacts with MBD2. Interacts with MBD3. Interacts with RBBP4. Interacts with RBBP7. In terms of processing, phosphorylated in vitro by IKBKE at Ser-45.

Its subcellular location is the nucleus. It localises to the chromosome. Its function is as follows. Inhibitor of cyclin-dependent kinase CDK2. Also acts as a component of the histone deacetylase NuRD complex which participates in the remodeling of chromatin. This is Cyclin-dependent kinase 2-associated protein 1 (Cdk2ap1) from Mus musculus (Mouse).